A 218-amino-acid chain; its full sequence is N-(5'-phosphoribosyl)anthranilate isomerase (218 aa).

It belongs to the TrpF family.

It carries out the reaction N-(5-phospho-beta-D-ribosyl)anthranilate = 1-(2-carboxyphenylamino)-1-deoxy-D-ribulose 5-phosphate. The protein operates within amino-acid biosynthesis; L-tryptophan biosynthesis; L-tryptophan from chorismate: step 3/5. This Stenotrophomonas maltophilia (strain R551-3) protein is N-(5'-phosphoribosyl)anthranilate isomerase.